Consider the following 251-residue polypeptide: 14-3-3-like protein (251 aa).

This sequence belongs to the 14-3-3 family.

In Fucus vesiculosus (Bladder wrack), this protein is 14-3-3-like protein.